The primary structure comprises 778 residues: Semaphorin-3ab (778 aa).

Positions 1 to 17 (MDYLWWIVLLIWTLIAP) are cleaved as a signal peptide. Residues 32 to 515 (RLKPSYKEML…SAIGVSQMPL (484 aa)) enclose the Sema domain. The N-linked (GlcNAc...) asparagine glycan is linked to asparagine 54. A disulfide bridge links cysteine 105 with cysteine 116. N-linked (GlcNAc...) asparagine glycosylation occurs at asparagine 127. 4 cysteine pairs are disulfide-bonded: cysteine 134–cysteine 143, cysteine 270–cysteine 382, cysteine 294–cysteine 342, and cysteine 518–cysteine 536. The Ig-like C2-type domain maps to 579-668 (GEAGLLDKTV…FIQTLLRLTL (90 aa)). N-linked (GlcNAc...) asparagine glycosylation is present at asparagine 593. Cysteine 652 and cysteine 716 are disulfide-bonded. Residues 727–778 (RRQKANLLHASQSHTSQILHSSQSHAKWKLLQENKKGRNRRTHEMQRAPRSV) are disordered. A compositionally biased stretch (polar residues) spans 735–751 (HASQSHTSQILHSSQSH). Residues 756-778 (LLQENKKGRNRRTHEMQRAPRSV) are compositionally biased toward basic and acidic residues.

This sequence belongs to the semaphorin family. As to expression, expressed in rhombomeres three and five, and in the posterior half of newly formed somites which is avoided by ventrally extending motor axons.

The protein localises to the secreted. In terms of biological role, might normally influence the midsegmental pathway choice of the ventrally extending motor axons by contributing to a repulsive domain in the posterior somite. The polypeptide is Semaphorin-3ab (sema3ab) (Danio rerio (Zebrafish)).